Here is a 186-residue protein sequence, read N- to C-terminus: ATP synthase subunit b (186 aa).

Residues 5–25 form a helical membrane-spanning segment; sequence LILNLLVLLAPAAVFAAGGGH.

This sequence belongs to the ATPase B chain family. In terms of assembly, F-type ATPases have 2 components, F(1) - the catalytic core - and F(0) - the membrane proton channel. F(1) has five subunits: alpha(3), beta(3), gamma(1), delta(1), epsilon(1). F(0) has three main subunits: a(1), b(2) and c(10-14). The alpha and beta chains form an alternating ring which encloses part of the gamma chain. F(1) is attached to F(0) by a central stalk formed by the gamma and epsilon chains, while a peripheral stalk is formed by the delta and b chains.

It is found in the cell inner membrane. In terms of biological role, f(1)F(0) ATP synthase produces ATP from ADP in the presence of a proton or sodium gradient. F-type ATPases consist of two structural domains, F(1) containing the extramembraneous catalytic core and F(0) containing the membrane proton channel, linked together by a central stalk and a peripheral stalk. During catalysis, ATP synthesis in the catalytic domain of F(1) is coupled via a rotary mechanism of the central stalk subunits to proton translocation. Functionally, component of the F(0) channel, it forms part of the peripheral stalk, linking F(1) to F(0). The sequence is that of ATP synthase subunit b from Bdellovibrio bacteriovorus (strain ATCC 15356 / DSM 50701 / NCIMB 9529 / HD100).